A 416-amino-acid polypeptide reads, in one-letter code: MLEQMGIAAKAASYKLALLSSGEKNRVLEKIADELEAQMESILSANVQDVEQARANGLSEAMLDRLALTPARLKAIADDVRQVCNLADPVGQVIDGGLLDSGLRLERRRVPLGVVGVIYEARPNVTVDVASLCLKTGNAVILRGGKETHRTNAATVRVIQKALKACGLPEAAVQAIDNPDRSLVNEMLRMDKYIDMLIPRGGAGLHKLCREQSTIPVITGGIGVCHIFVDSSADIAPALKIIVNAKTQRPSTCNTVETLLVHQDIAERFLPVLSKQMAESGVTLHGDETVMQVLHGPAKLVPLKPEELDNEFLSLDLNVVVVENMDGAIGHIREHGTQHSDAILTCDMHNAARFVNEVDSAAVYVNASTRFTDGGQFGLGAEVAVSTQKLHARGPMGLEALTTYKWIGFGDGTIRA.

The protein belongs to the gamma-glutamyl phosphate reductase family.

It localises to the cytoplasm. It carries out the reaction L-glutamate 5-semialdehyde + phosphate + NADP(+) = L-glutamyl 5-phosphate + NADPH + H(+). It functions in the pathway amino-acid biosynthesis; L-proline biosynthesis; L-glutamate 5-semialdehyde from L-glutamate: step 2/2. In terms of biological role, catalyzes the NADPH-dependent reduction of L-glutamate 5-phosphate into L-glutamate 5-semialdehyde and phosphate. The product spontaneously undergoes cyclization to form 1-pyrroline-5-carboxylate. The polypeptide is Gamma-glutamyl phosphate reductase (Salmonella paratyphi A (strain AKU_12601)).